The sequence spans 823 residues: MVSWDSGCLICLVVVTMAGLSLARPSFNLVVEDATLEPEEPPTKYQISQPDVHSALPGEPLELRCQLKDAVMISWTKDGVPLGPDNRTVIIGEYLQIKDASPRDSGLYACTAIRTLDSDTLYFIVNVTDALSSGDDEDDNDGSEDFVNDSNQMRAPYWTHTDKMEKRLHAVPAANTVKFRCPAMGNPTPTMRWLKNGKEFKQEHRIGGYKVRNQHWSLIMESVVPSDKGNYTCIVENQYGSINHTYHLDVVERSPHRPILQAGLPANASAVVGGDVEFVCKVYSDAQPHIQWIKHVERNGSKYGPDGLPYLQVLKAAGVNTTDKEIEVLYIRNVTFEDAGEYTCLAGNSIGISFHTAWLTVLPAPEKEKEFPTSPDYLEIAIYCIGVFLIACMVLTVILCRMKNTTKKPDFSSQPAVHKLTKRIPLRRQVTVSADSSSSMNSNTPLVRITTRLSSTADAPMLAGVSEYELPEDPKWEFPRDKLTLGKPLGEGCFGQVVMAEAVGIDKDRPKEAVTVAVKMLKDDATEKDLSDLVSEMEMMKMIGKHKNIINLLGACTQDGPLYVIVEYASKGNLREYLRARRPPGMEYSFDINRVPEEQMTFKDLVSCTYQLARGMEYLASQKCIHRDLAARNVLVTENNVMKIADFGLARDINNIDYYKKTTNGRLPVKWMAPEALFDRVYTHQSDVWSFGVLMWEIFTLGGSPYPGIPVEELFKLLKEGHRMDKPANCTNELYMMMRDCWQAVPSQRPTFKQLVEDLDRILTLTTNEEYLDLSGPLEQYSPSYPDTRSSCSSGDDSVFSPDPMPYEPCLPKYQHMNGSVKT.

The signal sequence occupies residues 1 to 23 (MVSWDSGCLICLVVVTMAGLSLA). Topologically, residues 24–379 (RPSFNLVVED…EFPTSPDYLE (356 aa)) are extracellular. The region spanning 27–128 (FNLVVEDATL…DTLYFIVNVT (102 aa)) is the Ig-like C2-type 1 domain. The cysteines at positions 65 and 110 are disulfide-linked. Residues Asn86, Asn126, and Asn148 are each glycosylated (N-linked (GlcNAc...) asparagine). Ig-like C2-type domains lie at 156-249 (PYWT…YHLD) and 258-360 (PILQ…AWLT). The interval 163 to 180 (KMEKRLHAVPAANTVKFR) is heparin-binding. Cys181 and Cys233 are disulfide-bonded. Asn230, Asn243, Asn267, Asn299, Asn320, and Asn333 each carry an N-linked (GlcNAc...) asparagine glycan. An intrachain disulfide couples Cys280 to Cys344. A helical membrane pass occupies residues 380 to 400 (IAIYCIGVFLIACMVLTVILC). At 401–823 (RMKNTTKKPD…YQHMNGSVKT (423 aa)) the chain is on the cytoplasmic side. Tyr468 bears the Phosphotyrosine; by autocatalysis mark. The 290-residue stretch at 483–772 (LTLGKPLGEG…LTLTTNEEYL (290 aa)) folds into the Protein kinase domain. ATP contacts are provided by residues 489-497 (LGEGCFGQV), Lys519, 567-569 (EYA), and Asn573. Position 588 is a phosphotyrosine; by autocatalysis (Tyr588). Asp628 serves as the catalytic Proton acceptor. Tyr658, Tyr659, and Tyr771 each carry phosphotyrosine; by autocatalysis.

The protein belongs to the protein kinase superfamily. Tyr protein kinase family. Fibroblast growth factor receptor subfamily. In terms of assembly, monomer. Homodimer after ligand binding. Autophosphorylated. Binding of FGF family members together with heparan sulfate proteoglycan or heparin promotes receptor dimerization and autophosphorylation on tyrosine residues. Autophosphorylation occurs in trans between the two FGFR molecules present in the dimer. Post-translationally, N-glycosylated in the endoplasmic reticulum. The N-glycan chains undergo further maturation to an Endo H-resistant form in the Golgi apparatus. In terms of processing, ubiquitinated. FGFR2 is rapidly ubiquitinated after autophosphorylation, leading to internalization and degradation. Subject to degradation both in lysosomes and by the proteasome.

Its subcellular location is the cell membrane. It is found in the golgi apparatus. It localises to the cytoplasmic vesicle. The catalysed reaction is L-tyrosyl-[protein] + ATP = O-phospho-L-tyrosyl-[protein] + ADP + H(+). With respect to regulation, present in an inactive conformation in the absence of bound ligand. Ligand binding leads to dimerization and activation by autophosphorylation on tyrosine residues. Tyrosine-protein kinase that acts as a cell-surface receptor for fibroblast growth factors and plays an essential role in the regulation of cell proliferation, differentiation, migration and apoptosis, and in the regulation of embryonic development. Required for normal embryonic patterning, limb bud development, lung morphogenesis, osteogenesis and skin development. Plays an essential role in the regulation of osteoblast differentiation, proliferation and apoptosis, and is required for normal skeleton development. Promotes cell proliferation in keratinocytes and immature osteoblasts, but promotes apoptosis in differentiated osteoblasts. Phosphorylates PLCG1, FRS2 and PAK4. Ligand binding leads to the activation of several signaling cascades. Activation of PLCG1 leads to the production of the cellular signaling molecules diacylglycerol and inositol 1,4,5-trisphosphate. Phosphorylation of FRS2 triggers recruitment of GRB2, GAB1, PIK3R1 and SOS1, and mediates activation of RAS, MAPK1/ERK2, MAPK3/ERK1 and the MAP kinase signaling pathway, as well as of the AKT1 signaling pathway. FGFR2 signaling is down-regulated by ubiquitination, internalization and degradation. Mutations that lead to constitutive kinase activation or impair normal FGFR2 maturation, internalization and degradation lead to aberrant signaling. Over-expressed FGFR2 promotes activation of STAT1. This chain is Fibroblast growth factor receptor 2 (FGFR2), found in Gallus gallus (Chicken).